The primary structure comprises 292 residues: Quinolinate synthase (292 aa).

Iminosuccinate-binding residues include H8 and S25. [4Fe-4S] cluster is bound at residue C70. Iminosuccinate is bound by residues Y96 to N98 and S113. Residue C158 coordinates [4Fe-4S] cluster. Iminosuccinate contacts are provided by residues H184–E186 and T201. C244 provides a ligand contact to [4Fe-4S] cluster.

The protein belongs to the quinolinate synthase family. Type 2 subfamily. It depends on [4Fe-4S] cluster as a cofactor.

The protein resides in the cytoplasm. It carries out the reaction iminosuccinate + dihydroxyacetone phosphate = quinolinate + phosphate + 2 H2O + H(+). It functions in the pathway cofactor biosynthesis; NAD(+) biosynthesis; quinolinate from iminoaspartate: step 1/1. Catalyzes the condensation of iminoaspartate with dihydroxyacetone phosphate to form quinolinate. In Methanopyrus kandleri (strain AV19 / DSM 6324 / JCM 9639 / NBRC 100938), this protein is Quinolinate synthase (nadA).